Here is a 407-residue protein sequence, read N- to C-terminus: Arginine biosynthesis bifunctional protein ArgJ (407 aa).

Positions 157, 183, 194, 280, 402, and 407 each coordinate substrate. The active-site Nucleophile is T194.

The protein belongs to the ArgJ family. As to quaternary structure, heterotetramer of two alpha and two beta chains.

It is found in the cytoplasm. It catalyses the reaction N(2)-acetyl-L-ornithine + L-glutamate = N-acetyl-L-glutamate + L-ornithine. It carries out the reaction L-glutamate + acetyl-CoA = N-acetyl-L-glutamate + CoA + H(+). Its pathway is amino-acid biosynthesis; L-arginine biosynthesis; L-ornithine and N-acetyl-L-glutamate from L-glutamate and N(2)-acetyl-L-ornithine (cyclic): step 1/1. The protein operates within amino-acid biosynthesis; L-arginine biosynthesis; N(2)-acetyl-L-ornithine from L-glutamate: step 1/4. Its function is as follows. Catalyzes two activities which are involved in the cyclic version of arginine biosynthesis: the synthesis of N-acetylglutamate from glutamate and acetyl-CoA as the acetyl donor, and of ornithine by transacetylation between N(2)-acetylornithine and glutamate. This Oceanobacillus iheyensis (strain DSM 14371 / CIP 107618 / JCM 11309 / KCTC 3954 / HTE831) protein is Arginine biosynthesis bifunctional protein ArgJ.